The sequence spans 621 residues: Chaperone protein HscA homolog (621 aa).

This sequence belongs to the heat shock protein 70 family.

Its function is as follows. Chaperone involved in the maturation of iron-sulfur cluster-containing proteins. Has a low intrinsic ATPase activity which is markedly stimulated by HscB. The protein is Chaperone protein HscA homolog of Acidithiobacillus ferrooxidans (strain ATCC 23270 / DSM 14882 / CIP 104768 / NCIMB 8455) (Ferrobacillus ferrooxidans (strain ATCC 23270)).